The sequence spans 197 residues: Potassium-transporting ATPase KdpC subunit (197 aa).

Residues 7–27 (PALVSMGLFTVLLGLAYPLAV) traverse the membrane as a helical segment.

Belongs to the KdpC family. The system is composed of three essential subunits: KdpA, KdpB and KdpC.

Its subcellular location is the cell inner membrane. Its function is as follows. Part of the high-affinity ATP-driven potassium transport (or Kdp) system, which catalyzes the hydrolysis of ATP coupled with the electrogenic transport of potassium into the cytoplasm. This subunit acts as a catalytic chaperone that increases the ATP-binding affinity of the ATP-hydrolyzing subunit KdpB by the formation of a transient KdpB/KdpC/ATP ternary complex. The protein is Potassium-transporting ATPase KdpC subunit of Caulobacter vibrioides (strain ATCC 19089 / CIP 103742 / CB 15) (Caulobacter crescentus).